Consider the following 566-residue polypeptide: Arginine--tRNA ligase (566 aa).

A 'HIGH' region motif is present at residues 121 to 131; it reads ANPNGPFHIGH.

Belongs to the class-I aminoacyl-tRNA synthetase family.

The protein resides in the cytoplasm. It catalyses the reaction tRNA(Arg) + L-arginine + ATP = L-arginyl-tRNA(Arg) + AMP + diphosphate. The chain is Arginine--tRNA ligase from Methanococcus maripaludis (strain C5 / ATCC BAA-1333).